The sequence spans 354 residues: S-adenosylmethionine:tRNA ribosyltransferase-isomerase (354 aa).

It belongs to the QueA family. In terms of assembly, monomer.

Its subcellular location is the cytoplasm. It carries out the reaction 7-aminomethyl-7-carbaguanosine(34) in tRNA + S-adenosyl-L-methionine = epoxyqueuosine(34) in tRNA + adenine + L-methionine + 2 H(+). The protein operates within tRNA modification; tRNA-queuosine biosynthesis. In terms of biological role, transfers and isomerizes the ribose moiety from AdoMet to the 7-aminomethyl group of 7-deazaguanine (preQ1-tRNA) to give epoxyqueuosine (oQ-tRNA). The sequence is that of S-adenosylmethionine:tRNA ribosyltransferase-isomerase from Salmonella schwarzengrund (strain CVM19633).